The sequence spans 267 residues: UPF0173 metal-dependent hydrolase THEYE_A0282 (267 aa).

It belongs to the UPF0173 family.

In Thermodesulfovibrio yellowstonii (strain ATCC 51303 / DSM 11347 / YP87), this protein is UPF0173 metal-dependent hydrolase THEYE_A0282.